A 474-amino-acid chain; its full sequence is 6-phospho-beta-galactosidase (474 aa).

Residues Gln19, His116, Asn159, Glu160, and Asn297 each contribute to the D-galactose 6-phosphate site. Glu160 acts as the Proton donor in catalysis. Catalysis depends on Glu375, which acts as the Nucleophile. D-galactose 6-phosphate-binding residues include Ser433, Trp434, Lys440, and Tyr442.

It belongs to the glycosyl hydrolase 1 family.

The enzyme catalyses a 6-phospho-beta-D-galactoside + H2O = D-galactose 6-phosphate + an alcohol. It participates in carbohydrate metabolism; lactose degradation; D-galactose 6-phosphate and beta-D-glucose from lactose 6-phosphate: step 1/1. This Lacticaseibacillus rhamnosus (Lactobacillus rhamnosus) protein is 6-phospho-beta-galactosidase.